A 325-amino-acid polypeptide reads, in one-letter code: Aldo-keto reductase family 1 member A1 (325 aa).

An N-acetylalanine modification is found at Ala-2. Ser-4 is subject to Phosphoserine. Residues 11–20 (GQKMPLIGLG), Thr-21, Trp-22, and Asp-45 each bind NADP(+). The active-site Proton donor is the Tyr-50. Lys-127 carries the N6-acetyllysine; alternate modification. N6-succinyllysine; alternate is present on Lys-127. An N6-succinyllysine modification is found at Lys-145. Residues Ser-162, Asn-163, Ser-211, Leu-213, Ser-215, Ser-216, Lys-263, Ser-264, Val-265, Thr-266, Arg-269, Gln-272, and Asn-273 each contribute to the NADP(+) site. Residue Ser-211 is modified to Phosphoserine.

Belongs to the aldo/keto reductase family. As to quaternary structure, monomer.

It localises to the cytoplasm. The protein localises to the cytosol. The protein resides in the apical cell membrane. It carries out the reaction a primary alcohol + NADP(+) = an aldehyde + NADPH + H(+). The catalysed reaction is glycerol + NADP(+) = D-glyceraldehyde + NADPH + H(+). It catalyses the reaction glycerol + NADP(+) = L-glyceraldehyde + NADPH + H(+). The enzyme catalyses L-gulonate + NADP(+) = aldehydo-D-glucuronate + NADPH + H(+). It carries out the reaction L-gulono-1,4-lactone + NADP(+) = D-glucurono-3,6-lactone + NADPH + H(+). The catalysed reaction is allyl alcohol + NADP(+) = acrolein + NADPH + H(+). It catalyses the reaction hydroxyacetone + NADP(+) = methylglyoxal + NADPH + H(+). The enzyme catalyses 3-deoxyfructose + NADP(+) = 3-deoxyglucosone + NADPH + H(+). It carries out the reaction (R)-mevalonate + NADP(+) = (R)-mevaldate + NADPH + H(+). The catalysed reaction is pyridine 3-methanol + NADP(+) = pyridine-3-carbaldehyde + NADPH + H(+). It catalyses the reaction S-nitroso-CoA + NADPH + H(+) = sulfinamide-CoA + NADP(+). The enzyme catalyses S-nitrosoglutathione + NADPH + H(+) = S-(hydroxysulfenamide)glutathione + NADP(+). Functionally, catalyzes the NADPH-dependent reduction of a wide variety of carbonyl-containing compounds to their corresponding alcohols. Displays enzymatic activity towards endogenous metabolites such as aromatic and aliphatic aldehydes, ketones, monosaccharides and bile acids, with a preference for negatively charged substrates, such as glucuronate and succinic semialdehyde. Plays an important role in ascorbic acid biosynthesis by catalyzing the reduction of D-glucuronic acid and D-glucurono-gamma-lactone. Functions as a detoxifiying enzyme by reducing a range of toxic aldehydes. Reduces methylglyoxal and 3-deoxyglucosone, which are present at elevated levels under hyperglycemic conditions and are cytotoxic. Involved also in the detoxification of lipid-derived aldehydes like acrolein. Plays a role in the activation of procarcinogens, such as polycyclic aromatic hydrocarbon trans-dihydrodiols, and in the metabolism of various xenobiotics and drugs. Also acts as an inhibitor of protein S-nitrosylation by mediating degradation of S-nitroso-coenzyme A (S-nitroso-CoA), a cofactor required to S-nitrosylate proteins. S-nitroso-CoA reductase activity is involved in reprogramming intermediary metabolism in renal proximal tubules, notably by inhibiting protein S-nitrosylation of isoform 2 of PKM (PKM2). Also acts as a S-nitroso-glutathione reductase by catalyzing the NADPH-dependent reduction of S-nitrosoglutathione. Displays no reductase activity towards retinoids. The protein is Aldo-keto reductase family 1 member A1 (AKR1A1) of Sus scrofa (Pig).